We begin with the raw amino-acid sequence, 426 residues long: Histone deacetylase 9 (426 aa).

The segment at 6 to 318 (KISYFYDGDV…WTVETGILLD (313 aa)) is histone deacetylase. The Proton donor/acceptor role is filled by H137. Residues D172, H174, and D261 each coordinate Zn(2+). Positions 383 to 426 (PDFYIPDFDEDEQNPDVRADQRSRDKQIQRDDEYFDGDNDNDAS) are disordered. Basic and acidic residues predominate over residues 397 to 414 (PDVRADQRSRDKQIQRDD). Residues 415 to 426 (EYFDGDNDNDAS) show a composition bias toward acidic residues.

The protein belongs to the histone deacetylase family. HD type 1 subfamily. In terms of assembly, interacts with AHL22. Binds to farnesylated ASG2 in the cytosol. Requires Zn(2+) as cofactor.

The protein resides in the nucleus. It is found in the cytoplasm. It localises to the cytosol. The enzyme catalyses N(6)-acetyl-L-lysyl-[histone] + H2O = L-lysyl-[histone] + acetate. Functionally, responsible for the deacetylation of lysine residues on the N-terminal part of the core histones (H2A, H2B, H3 and H4). Histone deacetylation gives a tag for epigenetic repression and plays an important role in transcriptional regulation, cell cycle progression and developmental events. Histone deacetylases act via the formation of large multiprotein complexes. The polypeptide is Histone deacetylase 9 (HDA9) (Arabidopsis thaliana (Mouse-ear cress)).